The sequence spans 228 residues: Indole-3-glycerol phosphate synthase (228 aa).

The protein belongs to the TrpC family.

It carries out the reaction 1-(2-carboxyphenylamino)-1-deoxy-D-ribulose 5-phosphate + H(+) = (1S,2R)-1-C-(indol-3-yl)glycerol 3-phosphate + CO2 + H2O. It participates in amino-acid biosynthesis; L-tryptophan biosynthesis; L-tryptophan from chorismate: step 4/5. The polypeptide is Indole-3-glycerol phosphate synthase (Pyrococcus furiosus (strain ATCC 43587 / DSM 3638 / JCM 8422 / Vc1)).